We begin with the raw amino-acid sequence, 714 residues long: Protein artemis (714 aa).

Disordered regions lie at residues 391–500 (ELFD…ESNA), 516–577 (ESSE…TVLI), 598–617 (ALLS…RWKL), and 638–683 (EKDA…LTPD). Polar residues predominate over residues 427–440 (NESTESYRANTAYT). Positions 447 to 468 (VDCEESNDDDDDDDDDDKEDDS) are enriched in acidic residues. Polar residues-rich tracts occupy residues 484–500 (SIAS…ESNA) and 532–543 (GSQSLFSDSDGV). Positions 544–561 (SDSTHISSQNSSQSTHIS) are enriched in low complexity. The span at 562 to 577 (EQGSQGWDSQMDTVLI) shows a compositional bias: polar residues. 2 stretches are compositionally biased toward basic and acidic residues: residues 603–615 (DTPR…DSRW) and 660–670 (RTPDLELKRDS). A Phosphoserine; by ATM modification is found at Ser670.

This sequence belongs to the DNA repair metallo-beta-lactamase (DRMBL) family. As to quaternary structure, interacts with PRKDC. In terms of processing, phosphorylation on undefined residues by PRKDC may stimulate endonucleolytic activity on 5' and 3' hairpins and overhangs. PRKDC must remain present, even after phosphorylation, for efficient hairpin opening.

Its subcellular location is the nucleus. Required for V(D)J recombination, the process by which exons encoding the antigen-binding domains of immunoglobulins and T-cell receptor proteins are assembled from individual V, (D), and J gene segments. V(D)J recombination is initiated by the lymphoid specific RAG endonuclease complex, which generates site specific DNA double strand breaks (DSBs). These DSBs present two types of DNA end structures: hairpin sealed coding ends and phosphorylated blunt signal ends. These ends are independently repaired by the non homologous end joining (NHEJ) pathway to form coding and signal joints respectively. This protein exhibits single-strand specific 5'-3' exonuclease activity in isolation, and acquires endonucleolytic activity on 5' and 3' hairpins and overhangs when in a complex with PRKDC. The latter activity is required specifically for the resolution of closed hairpins prior to the formation of the coding joint. May also be required for the repair of complex DSBs induced by ionizing radiation, which require substantial end-processing prior to religation by NHEJ. This chain is Protein artemis (DCLRE1C), found in Gallus gallus (Chicken).